A 316-amino-acid polypeptide reads, in one-letter code: tRNA dimethylallyltransferase (316 aa).

17 to 24 (GPTASGKT) serves as a coordination point for ATP. Substrate is bound at residue 19–24 (TASGKT). 4 interaction with substrate tRNA regions span residues 42 to 45 (DSAL), 166 to 170 (QRLSR), 247 to 252 (RCVGYR), and 280 to 287 (KRQITWLR).

Belongs to the IPP transferase family. Monomer. Requires Mg(2+) as cofactor.

It carries out the reaction adenosine(37) in tRNA + dimethylallyl diphosphate = N(6)-dimethylallyladenosine(37) in tRNA + diphosphate. Its function is as follows. Catalyzes the transfer of a dimethylallyl group onto the adenine at position 37 in tRNAs that read codons beginning with uridine, leading to the formation of N6-(dimethylallyl)adenosine (i(6)A). This Escherichia coli O157:H7 protein is tRNA dimethylallyltransferase.